The chain runs to 159 residues: Protein Smg homolog (159 aa).

This sequence belongs to the Smg family.

The polypeptide is Protein Smg homolog (Nitrosococcus oceani (strain ATCC 19707 / BCRC 17464 / JCM 30415 / NCIMB 11848 / C-107)).